We begin with the raw amino-acid sequence, 195 residues long: ATP-dependent Clp protease proteolytic subunit (195 aa).

The active-site Nucleophile is serine 98. Histidine 123 is a catalytic residue.

It belongs to the peptidase S14 family. In terms of assembly, fourteen ClpP subunits assemble into 2 heptameric rings which stack back to back to give a disk-like structure with a central cavity, resembling the structure of eukaryotic proteasomes.

The protein localises to the cytoplasm. The catalysed reaction is Hydrolysis of proteins to small peptides in the presence of ATP and magnesium. alpha-casein is the usual test substrate. In the absence of ATP, only oligopeptides shorter than five residues are hydrolyzed (such as succinyl-Leu-Tyr-|-NHMec, and Leu-Tyr-Leu-|-Tyr-Trp, in which cleavage of the -Tyr-|-Leu- and -Tyr-|-Trp bonds also occurs).. In terms of biological role, cleaves peptides in various proteins in a process that requires ATP hydrolysis. Has a chymotrypsin-like activity. Plays a major role in the degradation of misfolded proteins. The sequence is that of ATP-dependent Clp protease proteolytic subunit from Sulfurovum sp. (strain NBC37-1).